Consider the following 632-residue polypeptide: 1-deoxy-D-xylulose-5-phosphate synthase (632 aa).

Residues His77 and 118 to 120 each bind thiamine diphosphate; that span reads GHS. Mg(2+) is bound at residue Asp149. Thiamine diphosphate-binding positions include 150–151, Asn178, Tyr289, and Glu372; that span reads GA. Residue Asn178 coordinates Mg(2+).

It belongs to the transketolase family. DXPS subfamily. Homodimer. Requires Mg(2+) as cofactor. Thiamine diphosphate is required as a cofactor.

It catalyses the reaction D-glyceraldehyde 3-phosphate + pyruvate + H(+) = 1-deoxy-D-xylulose 5-phosphate + CO2. It functions in the pathway metabolic intermediate biosynthesis; 1-deoxy-D-xylulose 5-phosphate biosynthesis; 1-deoxy-D-xylulose 5-phosphate from D-glyceraldehyde 3-phosphate and pyruvate: step 1/1. Functionally, catalyzes the acyloin condensation reaction between C atoms 2 and 3 of pyruvate and glyceraldehyde 3-phosphate to yield 1-deoxy-D-xylulose-5-phosphate (DXP). The sequence is that of 1-deoxy-D-xylulose-5-phosphate synthase from Listeria innocua serovar 6a (strain ATCC BAA-680 / CLIP 11262).